We begin with the raw amino-acid sequence, 319 residues long: MVVLVDTVSANPVRPRHPEKAARPDALSPKKPDWIRVRAPTTRGYGETRGIVKENGLHTVCEEAGCPNIGECWDKKHATFMIMGDTCTRACAFCNVKTGMPGALDANEPAYVAEATRKLGLQHLVITSVDRDDLADGGAAHFAATIRAVREACPTTTIEILTPDFLRKDGALEVVVAAKPDVFNHNLETVPSRYLSVRPGARYFHSIRLLQRVKELDPSIFTKSGIMVGLGEERHEVLQVMDDLRSAEVDFLTIGQYLQPTRKHHAVMRYVTPDEFAGYQTTAYAKGFLMVSASPMTRSSHHAGDDFAKLKAARAARAR.

The segment at 6 to 29 (DTVSANPVRPRHPEKAARPDALSP) is disordered. Over residues 16–29 (RHPEKAARPDALSP) the composition is skewed to basic and acidic residues. 7 residues coordinate [4Fe-4S] cluster: Cys-61, Cys-66, Cys-72, Cys-87, Cys-91, Cys-94, and Ser-300. Residues 73–289 (WDKKHATFMI…QTTAYAKGFL (217 aa)) enclose the Radical SAM core domain.

Belongs to the radical SAM superfamily. Lipoyl synthase family. It depends on [4Fe-4S] cluster as a cofactor.

The protein localises to the cytoplasm. The catalysed reaction is [[Fe-S] cluster scaffold protein carrying a second [4Fe-4S](2+) cluster] + N(6)-octanoyl-L-lysyl-[protein] + 2 oxidized [2Fe-2S]-[ferredoxin] + 2 S-adenosyl-L-methionine + 4 H(+) = [[Fe-S] cluster scaffold protein] + N(6)-[(R)-dihydrolipoyl]-L-lysyl-[protein] + 4 Fe(3+) + 2 hydrogen sulfide + 2 5'-deoxyadenosine + 2 L-methionine + 2 reduced [2Fe-2S]-[ferredoxin]. The protein operates within protein modification; protein lipoylation via endogenous pathway; protein N(6)-(lipoyl)lysine from octanoyl-[acyl-carrier-protein]: step 2/2. In terms of biological role, catalyzes the radical-mediated insertion of two sulfur atoms into the C-6 and C-8 positions of the octanoyl moiety bound to the lipoyl domains of lipoate-dependent enzymes, thereby converting the octanoylated domains into lipoylated derivatives. This chain is Lipoyl synthase, found in Rhodopseudomonas palustris (strain ATCC BAA-98 / CGA009).